A 390-amino-acid polypeptide reads, in one-letter code: Galactokinase (390 aa).

35–38 (EHTD) serves as a coordination point for substrate. 125-131 (GAGLSSS) contacts ATP. Residues Ser-131 and Glu-163 each contribute to the Mg(2+) site. The active-site Proton acceptor is Asp-175. Position 224 (Tyr-224) interacts with substrate.

It belongs to the GHMP kinase family. GalK subfamily.

The protein resides in the cytoplasm. The catalysed reaction is alpha-D-galactose + ATP = alpha-D-galactose 1-phosphate + ADP + H(+). It participates in carbohydrate metabolism; galactose metabolism. In terms of biological role, catalyzes the transfer of the gamma-phosphate of ATP to D-galactose to form alpha-D-galactose-1-phosphate (Gal-1-P). This Proteus mirabilis (strain HI4320) protein is Galactokinase.